The chain runs to 314 residues: Olfactory receptor 5D13 (314 aa).

The Extracellular portion of the chain corresponds to 1–27; sequence MMASERNQSSTPTFILLGFSEYPEIQV. A glycan (N-linked (GlcNAc...) asparagine) is linked at Asn-7. Residues 28–48 traverse the membrane as a helical segment; sequence PLFLVFLFVYTVTVVGNLGMI. Topologically, residues 49–56 are cytoplasmic; the sequence is IIIRLNSK. The chain crosses the membrane as a helical span at residues 57 to 77; the sequence is LHTIMCFFLSHLSLTDFCFST. At 78–101 the chain is on the extracellular side; sequence VVTPKLLENLVVEYRTISFSGCIM. The helical transmembrane segment at 102 to 122 threads the bilayer; it reads QFCFACIFGVTETFMLAAMAY. Topologically, residues 123–141 are cytoplasmic; that stretch reads DRFVAVCKPLLYTTIMSQK. Residues 142–162 form a helical membrane-spanning segment; sequence LCALLVAGSYTWGIVCSLILT. At 163-198 the chain is on the extracellular side; the sequence is YFLLDLSFCESTFINNFICDHSVIVSASYSDPYISQ. Residues 199–219 traverse the membrane as a helical segment; the sequence is RLCFIIAIFNEVSSLIIILTS. The Cytoplasmic segment spans residues 220–239; the sequence is YMLIFTTIMKMRSASGRQKT. Residues 240-260 traverse the membrane as a helical segment; sequence FSTCASHLTAITIFHGTILFL. Over 261–273 the chain is Extracellular; sequence YCVPNPKTSSLIV. Residues 274-294 form a helical membrane-spanning segment; it reads TVASVFYTVAIPMLNPLIYSL. At 295–314 the chain is on the cytoplasmic side; sequence RNKDINNMFEKLVVTKLIYH.

It belongs to the G-protein coupled receptor 1 family.

The protein localises to the cell membrane. Odorant receptor. The polypeptide is Olfactory receptor 5D13 (OR5D13) (Homo sapiens (Human)).